A 398-amino-acid chain; its full sequence is WW domain-binding protein 4 (398 aa).

The segment at 11–42 adopts a Matrin-type zinc-finger fold; it reads KFCDYCKCWIADNRPSIDFHERGKNHKENVAK. 4 disordered regions span residues 84–182, 200–274, 300–350, and 379–398; these read GIKP…SVWV, VSTW…KLSP, LASK…PPVL, and KKRE…LDDQ. Over residues 92-103 the composition is skewed to polar residues; the sequence is PSSTLNKTQSIT. The span at 112 to 125 shows a compositional bias: basic residues; it reads KKEKKEKKEKKKKT. The segment covering 126-139 has biased composition (basic and acidic residues); sequence REGTSESPKTEPKE. WW domains are found at residues 134-167 and 175-208; these read KTEP…KPKG and SHTG…KPDG. Positions 169-178 are enriched in polar residues; it reads QGNSKTSHTG. Residues 221–232 are compositionally biased toward basic and acidic residues; it reads KHSEEADSRASE. The span at 233 to 242 shows a compositional bias: acidic residues; it reads SDSEQEDSES. Residues 305-316 show a composition bias toward basic and acidic residues; it reads ASSDESKTDTYG. The segment covering 324 to 333 has biased composition (acidic residues); the sequence is EEEEEPDEKV.

In terms of assembly, component of the spliceosome B complex. Associated with U2 snRNPs. Binds splicing factors SNRPB, SNRPC and SF1.

The protein localises to the nucleus. It is found in the nucleus speckle. Its function is as follows. Involved in pre-mRNA splicing as a component of the spliceosome. May play a role in cross-intron bridging of U1 and U2 snRNPs in the mammalian A complex. In Gallus gallus (Chicken), this protein is WW domain-binding protein 4 (WBP4).